A 432-amino-acid polypeptide reads, in one-letter code: Enolase (432 aa).

Gln-164 contacts (2R)-2-phosphoglycerate. Catalysis depends on Glu-206, which acts as the Proton donor. Residues Asp-243, Glu-284, and Asp-311 each coordinate Mg(2+). Residues Lys-336, Arg-365, Ser-366, and Lys-387 each contribute to the (2R)-2-phosphoglycerate site. The active-site Proton acceptor is Lys-336.

Belongs to the enolase family. Mg(2+) is required as a cofactor.

The protein localises to the cytoplasm. It is found in the secreted. It localises to the cell surface. The enzyme catalyses (2R)-2-phosphoglycerate = phosphoenolpyruvate + H2O. The protein operates within carbohydrate degradation; glycolysis; pyruvate from D-glyceraldehyde 3-phosphate: step 4/5. Functionally, catalyzes the reversible conversion of 2-phosphoglycerate (2-PG) into phosphoenolpyruvate (PEP). It is essential for the degradation of carbohydrates via glycolysis. This chain is Enolase, found in Synechococcus sp. (strain JA-3-3Ab) (Cyanobacteria bacterium Yellowstone A-Prime).